The sequence spans 879 residues: MELASKYNPADVEGKWYQYWLEHRLFSSKPDGREPYTIVIPPPNVTGVLHMGHMLNNTIQDILVRRARMEGKNACWVPGTDHASIATEAKVVNKLAAQGIKKTDLTRDEFLKHAWDWTEEHGGIILKQLRKLGASCDWDRTAFTMDEERSKSVLKVFVDLYNKGLIYRGVRMVNWDPKALTALSDEEVIYKEEHGKLFYLRYKVEGDPEGRYAVVATTRPETIMGDTAMCINPNDPKNAWLKGKKVIVPLVNRVIPVIEDDYVDIEFGTGCLKVTPAHDVNDYMLGEKYNLPSIDIFNDNGTLSEAAGLYIGMDRFDVRKQIEKDLDAAGLLEKTEAYTNKVGYSERTNVVIEPKLSMQWFLKMQHFADMALPPVMNDELKFYPAKYKNTYRHWMENIKDWCISRQLWWGHRIPAYFLPEGGYVVAATPEEALAKAKEKTGNAALTMDDLRQDEDCLDTWFSSWLWPISLFDGINHPGNEEISYYYPTSDLVTGPDIIFFWVARMIMVGYEYEGKMPFKNVYFTGIVRDKLGRKMSKSLGNSPDPLELIDKYGADGVRMGMMLAAPAGNDILFDDALCEQGRNFCSKIWNAFRLIKGWTVDDNIQASDAAKLAVHWFESKQNEVAAEVADLFSKYRLSEALMAVYKLFWDEFSSWYLEMIKPAYGQGIDRTTYSATLCFLDNLLHLLHPFMPFITEELWQQMYERNAEEGESLMVSALSMDTYVDTAFVAQFEVVKGVISNIRSIRLQKNIAQKEPLDLQVLGENPVAEFNAVIQKMCNLSSITVVESKAEGASSFMVGTTEYAVPLGNMIDVEAEIARMEAELKHKEGFLQGVLKKLSNEKFINNAPAAVLEMERKKQADAESIISSLKESIAALKKA.

The 'HIGH' region motif lies at 43–53 (PNVTGVLHMGH). Positions 534–538 (KMSKS) match the 'KMSKS' region motif. Lys537 contacts ATP. Residues 807 to 878 (LGNMIDVEAE…LKESIAALKK (72 aa)) adopt a coiled-coil conformation.

It belongs to the class-I aminoacyl-tRNA synthetase family. ValS type 1 subfamily. Monomer.

The protein resides in the cytoplasm. It catalyses the reaction tRNA(Val) + L-valine + ATP = L-valyl-tRNA(Val) + AMP + diphosphate. Functionally, catalyzes the attachment of valine to tRNA(Val). As ValRS can inadvertently accommodate and process structurally similar amino acids such as threonine, to avoid such errors, it has a 'posttransfer' editing activity that hydrolyzes mischarged Thr-tRNA(Val) in a tRNA-dependent manner. This is Valine--tRNA ligase from Bacteroides thetaiotaomicron (strain ATCC 29148 / DSM 2079 / JCM 5827 / CCUG 10774 / NCTC 10582 / VPI-5482 / E50).